Consider the following 1798-residue polypeptide: U3 small nucleolar RNA-associated protein 10 (1798 aa).

The stretch at 583-620 (LDFQALLPFLLVTLTDPSERVRREAAAALAAVGSLYKK) is one HEAT 1 repeat. 2 helical membrane-spanning segments follow: residues 942-962 (IQSG…AIVN) and 998-1018 (ALLL…HSVM). 4 HEAT repeats span residues 1042-1079 (QTID…AFEH), 1249-1286 (LTLV…QNPE), 1293-1331 (IRVL…KYGK), and 1754-1791 (ALLP…VLGE).

Belongs to the HEATR1/UTP10 family. As to quaternary structure, component of the ribosomal small subunit (SSU) processome.

The protein resides in the nucleus. It is found in the nucleolus. The protein localises to the membrane. Functionally, involved in nucleolar processing of pre-18S ribosomal RNA. Involved in ribosome biosynthesis. The protein is U3 small nucleolar RNA-associated protein 10 of Aspergillus fumigatus (strain ATCC MYA-4609 / CBS 101355 / FGSC A1100 / Af293) (Neosartorya fumigata).